The following is a 416-amino-acid chain: Enterobactin exporter EntS (416 aa).

The Cytoplasmic portion of the chain corresponds to 1–21 (MNRQSWLLNLSLLKTHPAFRA). Residues 22 to 42 (VFLARFISIVSLGLLGVAVPV) form a helical membrane-spanning segment. Topologically, residues 43–55 (QIQMMTHSTWQVG) are periplasmic. Residues 56–76 (LSVTLTGSAMFVGLMVGGVLA) form a helical membrane-spanning segment. Over 77-83 (DRYERKK) the chain is Cytoplasmic. Residues 84–104 (VILLARGTCGIGFIGLCLNAL) form a helical membrane-spanning segment. At 105–109 (LPEPS) the chain is on the periplasmic side. A helical membrane pass occupies residues 110-130 (LLAIYLLGLWDGFFASLGVTA). The Cytoplasmic segment spans residues 131 to 156 (LLAATPALVGRENLMQAGAITMLTVR). Residues 157-177 (LGSVISPMLGGVLLATGGVAW) form a helical membrane-spanning segment. A topological domain (periplasmic) is located at residue N178. The helical transmembrane segment at 179-199 (YGLAAAGTFITLLPLLSLPAL) threads the bilayer. The Cytoplasmic portion of the chain corresponds to 200 to 218 (PPPPQPREHPLKSLLAAFR). A helical transmembrane segment spans residues 219–239 (FLLSSPLIGGIALLGGLLTMA). At 240–256 (SAVRVLYPALAINWHMS) the chain is on the periplasmic side. Residues 257-277 (AAQIGLLYAAIPLGAAVGALT) traverse the membrane as a helical segment. The Cytoplasmic portion of the chain corresponds to 278-287 (SGQLAHSVRP). The helical transmembrane segment at 288–307 (GLLMLVSTVGSFLAIGVFGL) threads the bilayer. At 308–313 (MPVWLL) the chain is on the periplasmic side. Residues 314–336 (GVICLALFGWLSAISSLLQYTLL) form a helical membrane-spanning segment. Over 337–356 (QTQTPEAMLGRINGLWTAQN) the chain is Cytoplasmic. The chain crosses the membrane as a helical span at residues 357–377 (VTGDAIGAALLGGLGAMMTPV). Position 378 (A378) is a topological domain, periplasmic. The helical transmembrane segment at 379-399 (SASVSGFGLVIVGLLLMLLLG) threads the bilayer. Residues 400–416 (ELRRFRQPPPVPDGAPL) are Cytoplasmic-facing.

Belongs to the major facilitator superfamily. EntS (TC 2.A.1.38) family.

The protein resides in the cell inner membrane. Its function is as follows. Component of an export pathway for enterobactin. The sequence is that of Enterobactin exporter EntS from Citrobacter koseri (strain ATCC BAA-895 / CDC 4225-83 / SGSC4696).